Here is a 500-residue protein sequence, read N- to C-terminus: Glycerol kinase (500 aa).

An ADP-binding site is contributed by Thr12. ATP is bound by residues Thr12, Thr13, and Ser14. Thr12 is a sn-glycerol 3-phosphate binding site. Arg16 serves as a coordination point for ADP. Sn-glycerol 3-phosphate is bound by residues Arg82, Glu83, Tyr135, and Asp245. Glycerol-binding residues include Arg82, Glu83, Tyr135, Asp245, and Gln246. Thr267 and Gly310 together coordinate ADP. ATP-binding residues include Thr267, Gly310, Gln314, and Gly411. ADP contacts are provided by Gly411 and Asn415.

This sequence belongs to the FGGY kinase family. Homotetramer and homodimer (in equilibrium).

The catalysed reaction is glycerol + ATP = sn-glycerol 3-phosphate + ADP + H(+). Its pathway is polyol metabolism; glycerol degradation via glycerol kinase pathway; sn-glycerol 3-phosphate from glycerol: step 1/1. Its activity is regulated as follows. Activated by phosphorylation and inhibited by fructose 1,6-bisphosphate (FBP). In terms of biological role, key enzyme in the regulation of glycerol uptake and metabolism. Catalyzes the phosphorylation of glycerol to yield sn-glycerol 3-phosphate. This chain is Glycerol kinase, found in Clostridium perfringens (strain 13 / Type A).